The primary structure comprises 251 residues: Small ribosomal subunit protein uS2 (251 aa).

Belongs to the universal ribosomal protein uS2 family.

This Synechococcus sp. (strain ATCC 27144 / PCC 6301 / SAUG 1402/1) (Anacystis nidulans) protein is Small ribosomal subunit protein uS2.